The sequence spans 190 residues: GTP cyclohydrolase 1 (190 aa).

Zn(2+)-binding residues include C75, H78, and C146.

The protein belongs to the GTP cyclohydrolase I family. Toroid-shaped homodecamer, composed of two pentamers of five dimers.

The catalysed reaction is GTP + H2O = 7,8-dihydroneopterin 3'-triphosphate + formate + H(+). It participates in cofactor biosynthesis; 7,8-dihydroneopterin triphosphate biosynthesis; 7,8-dihydroneopterin triphosphate from GTP: step 1/1. The protein is GTP cyclohydrolase 1 of Campylobacter curvus (strain 525.92).